The chain runs to 160 residues: Large ribosomal subunit protein uL22c (160 aa).

It belongs to the universal ribosomal protein uL22 family. In terms of assembly, part of the 50S ribosomal subunit.

It localises to the plastid. It is found in the chloroplast. Its function is as follows. This protein binds specifically to 23S rRNA. In terms of biological role, the globular domain of the protein is located near the polypeptide exit tunnel on the outside of the subunit, while an extended beta-hairpin is found that lines the wall of the exit tunnel in the center of the 70S ribosome. This chain is Large ribosomal subunit protein uL22c (rpl22), found in Draba nemorosa (Woodland whitlowgrass).